Consider the following 180-residue polypeptide: DNA-directed RNA polymerase subunit omega (180 aa).

The interval 100–180 (ISKSGTPILP…NSDDSETTNS (81 aa)) is disordered. Composition is skewed to acidic residues over residues 137–151 (EVDV…DEET) and 159–180 (AEAE…TTNS).

It belongs to the RNA polymerase subunit omega family. The RNAP catalytic core consists of 2 alpha, 1 beta, 1 beta' and 1 omega subunit. When a sigma factor is associated with the core the holoenzyme is formed, which can initiate transcription.

The catalysed reaction is RNA(n) + a ribonucleoside 5'-triphosphate = RNA(n+1) + diphosphate. Promotes RNA polymerase assembly. Latches the N- and C-terminal regions of the beta' subunit thereby facilitating its interaction with the beta and alpha subunits. The protein is DNA-directed RNA polymerase subunit omega of Pelagibacter ubique (strain HTCC1062).